Reading from the N-terminus, the 109-residue chain is Small ribosomal subunit protein bS16 (109 aa).

Positions 87-109 (ALRETPKKSAPKAKAQERAKAAG) are disordered. Basic and acidic residues predominate over residues 100-109 (KAQERAKAAG).

It belongs to the bacterial ribosomal protein bS16 family.

This is Small ribosomal subunit protein bS16 from Rhodospirillum centenum (strain ATCC 51521 / SW).